Consider the following 805-residue polypeptide: Sucrose synthase (805 aa).

Residues 275–752 form a GT-B glycosyltransferase region; it reads MVFNVVILSP…GLQRIEEKYT (478 aa).

It belongs to the glycosyltransferase 1 family. Plant sucrose synthase subfamily.

It carries out the reaction an NDP-alpha-D-glucose + D-fructose = a ribonucleoside 5'-diphosphate + sucrose + H(+). Its function is as follows. Sucrose-cleaving enzyme that provides UDP-glucose and fructose for various metabolic pathways. The protein is Sucrose synthase (SS1) of Vigna radiata var. radiata (Mung bean).